Reading from the N-terminus, the 717-residue chain is Segment polarity protein dishevelled homolog DVL-3 (717 aa).

One can recognise a DIX domain in the interval 1 to 82 (MGETKVIYHL…RVVCWLVSAD (82 aa)). Residues 89–235 (GSVCADIQSD…PQIERSSSFS (147 aa)) are disordered. Residues 118-127 (HPNTRGSQEN) show a composition bias toward polar residues. The span at 140–155 (ARRERPGRKETSEHAT) shows a compositional bias: basic and acidic residues. Positions 173 to 189 (ESSSTLMSSELDSTSFF) are enriched in low complexity. Residues 199–210 (RFSNSTEQSSAS) show a composition bias toward polar residues. The segment covering 212-224 (LMRRHKRRRRKPK) has biased composition (basic residues). The 86-residue stretch at 248–333 (TVTLNMEKYN…KPGPITLTVA (86 aa)) folds into the PDZ domain. The 75-residue stretch at 421–495 (SESGLEVRDR…SEQCYYIFGD (75 aa)) folds into the DEP domain. The disordered stretch occupies residues 552–653 (PDPAYIYGGG…THQSFGPPGI (102 aa)). A compositionally biased stretch (low complexity) spans 564 to 579 (GSQHSEGSRSSGSNRS). 2 stretches are compositionally biased toward basic and acidic residues: residues 580–593 (STEK…KGGD) and 602–618 (ESDH…RAAS). A compositionally biased stretch (basic residues) spans 629-645 (HRSHHSIAHSIRSHHTH).

It belongs to the DSH family. Expressed throughout the epidermis.

It is found in the cytoplasm. In terms of biological role, involved in the signal transduction pathway mediated by multiple Wnt genes. Required during ciliogenesis for the docking of basal bodies to the apical plasma membrane. The sequence is that of Segment polarity protein dishevelled homolog DVL-3 from Xenopus laevis (African clawed frog).